The primary structure comprises 137 residues: Small ribosomal subunit protein uS19 (137 aa).

The tract at residues 115–137 (RNRVSHGSAGVGATRSSKFVPLK) is disordered.

It belongs to the universal ribosomal protein uS19 family.

Protein S19 forms a complex with S13 that binds strongly to the 16S ribosomal RNA. In Methanococcoides burtonii (strain DSM 6242 / NBRC 107633 / OCM 468 / ACE-M), this protein is Small ribosomal subunit protein uS19.